The chain runs to 150 residues: Protein Smg homolog (150 aa).

The protein belongs to the Smg family.

In Methylobacillus flagellatus (strain ATCC 51484 / DSM 6875 / VKM B-1610 / KT), this protein is Protein Smg homolog.